Consider the following 80-residue polypeptide: Metallothionein-like protein 1 (80 aa).

This sequence belongs to the metallothionein superfamily. Type 15 family.

Its function is as follows. Metallothioneins have a high content of cysteine residues that bind various heavy metals. This chain is Metallothionein-like protein 1 (METAL1), found in Coffea arabica (Arabian coffee).